The sequence spans 73 residues: Conotoxin Vc6.17 (73 aa).

The N-terminal stretch at 1-19 is a signal peptide; it reads MQKLIILLLVAAVLMSTQA. Positions 20 to 44 are excised as a propeptide; sequence LFQEKRRKEKIDLLSKRKTDAEKQH. Disulfide bonds link cysteine 48–cysteine 62, cysteine 55–cysteine 66, and cysteine 61–cysteine 71.

The protein belongs to the conotoxin O2 superfamily. As to expression, expressed by the venom duct.

The protein localises to the secreted. Functionally, inhibits voltage-gated ion channels. This Conus victoriae (Queen Victoria cone) protein is Conotoxin Vc6.17.